Here is a 226-residue protein sequence, read N- to C-terminus: Phosphoglycolate phosphatase (226 aa).

Residue Asp-9 is the Nucleophile of the active site. Positions 9 and 11 each coordinate Mg(2+). Lys-150 serves as a coordination point for substrate. Residues Asp-173 and Asp-177 each coordinate Mg(2+).

The protein belongs to the archaeal SPP-like hydrolase family. The cofactor is Mg(2+).

It catalyses the reaction 2-phosphoglycolate + H2O = glycolate + phosphate. In terms of biological role, catalyzes the dephosphorylation of 2-phosphoglycolate. This chain is Phosphoglycolate phosphatase, found in Methanosarcina mazei (strain ATCC BAA-159 / DSM 3647 / Goe1 / Go1 / JCM 11833 / OCM 88) (Methanosarcina frisia).